We begin with the raw amino-acid sequence, 234 residues long: MNHLPEDMENALTGSQSSHASLRNIHSINPTQLMARIESYEGREKKGISDVRRTFCLFVTFDLLFVTLLWIIELNVNGGIENTLEKEVMQYDYYSSYFDIFLLAVFRFKVLILAYAVCRLRHWWAIALTTAVTSAFLLAKVILSKLFSQGAFGYVLPIISFILAWIETWFLDFKVLPQEAEEENRLLIVQDASERAALIPGGLSDGQFYSPPESEAGSEEAEEKQDSEKPLLEL.

N-acetylmethionine is present on Met-1. Over 1 to 53 the chain is Cytoplasmic; it reads MNHLPEDMENALTGSQSSHASLRNIHSINPTQLMARIESYEGREKKGISDVRR. Residues Ser-15, Ser-21, and Ser-27 each carry the phosphoserine modification. The MENTAL domain occupies 48 to 218; that stretch reads ISDVRRTFCL…YSPPESEAGS (171 aa). Residues 54–74 form a helical membrane-spanning segment; that stretch reads TFCLFVTFDLLFVTLLWIIEL. Topologically, residues 75 to 97 are extracellular; that stretch reads NVNGGIENTLEKEVMQYDYYSSY. A helical transmembrane segment spans residues 98–118; it reads FDIFLLAVFRFKVLILAYAVC. Residues 119–122 lie on the Cytoplasmic side of the membrane; it reads RLRH. A helical membrane pass occupies residues 123–143; sequence WWAIALTTAVTSAFLLAKVIL. The Extracellular segment spans residues 144–150; sequence SKLFSQG. Residues 151–171 form a helical membrane-spanning segment; it reads AFGYVLPIISFILAWIETWFL. The Cytoplasmic segment spans residues 172-234; the sequence is DFKVLPQEAE…QDSEKPLLEL (63 aa). At Ser-193 the chain carries Phosphoserine. The segment at 200-234 is disordered; that stretch reads PGGLSDGQFYSPPESEAGSEEAEEKQDSEKPLLEL. Positions 208–213 match the FFAT motif; the sequence is FYSPPE. Residues 224–234 are compositionally biased toward basic and acidic residues; it reads KQDSEKPLLEL.

It belongs to the STARD3 family. In terms of assembly, homodimer. Interacts (via the MENTAL domain) with STARD3NL. Interacts (via FFAT motif) with VAPA. Interacts (via FFAT motif) with VAPB. Interacts (via FFAT motif) with MOSPD2 (via MSP domain).

The protein resides in the late endosome membrane. Functionally, tethering protein that creates contact site between the endoplasmic reticulum and late endosomes: localizes to late endosome membranes and contacts the endoplasmic reticulum via interaction with VAPA and VAPB. The polypeptide is STARD3 N-terminal-like protein (Homo sapiens (Human)).